The primary structure comprises 318 residues: Ethyl acetate hydrolase (318 aa).

Catalysis depends on residues S165, D261, and H291.

Belongs to the 'GDXG' lipolytic enzyme family. In terms of assembly, monomer.

It localises to the cytoplasm. It carries out the reaction ethyl acetate + H2O = ethanol + acetate + H(+). Its activity is regulated as follows. Inhibited by the serine protease inhibitor phenylmethylsulfonyl fluoride, the histidine reagent diethylpyrocarbonate and two sulfhydryl reagents, mercuric chloride and naphthol AS-D chloroacetate. Not inhibited by EDTA. In terms of biological role, esterase that catalyzes the hydrolysis of ethyl acetate. Can also use propyl acetate and the chromogenic substrates alpha-naphthyl acetate, alpha-naphthyl propionate, alpha-naphthyl caproate and 4-nitrophenyl acetate, with a preference for short-chain aliphatic esters. Highest activity is obtained in vitro with propyl acetate, followed by ethyl acetate. In vivo, could be involved in pyoverdine biosynthesis, but its specific role and its in vivo substrate have not been identified. This chain is Ethyl acetate hydrolase, found in Pseudomonas putida (Arthrobacter siderocapsulatus).